Here is a 213-residue protein sequence, read N- to C-terminus: Holliday junction resolvase RecU (213 aa).

Residues Thr-99, Asp-101, Glu-114, and Gln-133 each coordinate Mg(2+).

It belongs to the RecU family. Requires Mg(2+) as cofactor.

It is found in the cytoplasm. It carries out the reaction Endonucleolytic cleavage at a junction such as a reciprocal single-stranded crossover between two homologous DNA duplexes (Holliday junction).. In terms of biological role, endonuclease that resolves Holliday junction intermediates in genetic recombination. Cleaves mobile four-strand junctions by introducing symmetrical nicks in paired strands. Promotes annealing of linear ssDNA with homologous dsDNA. Required for DNA repair, homologous recombination and chromosome segregation. This Lactococcus lactis subsp. cremoris (strain SK11) protein is Holliday junction resolvase RecU.